Reading from the N-terminus, the 722-residue chain is Polyribonucleotide nucleotidyltransferase (722 aa).

Positions 487 and 493 each coordinate Mg(2+). The KH domain maps to 554–613 (PRMVSFKIHPDKIREVIGKGGATIQALTKETGCSIDIKDDGTVTIASTSAEGMAEAKARI). Residues 623–691 (GKIYEGPVVK…ERGRLRLSLK (69 aa)) enclose the S1 motif domain.

Belongs to the polyribonucleotide nucleotidyltransferase family. Mg(2+) serves as cofactor.

It localises to the cytoplasm. It catalyses the reaction RNA(n+1) + phosphate = RNA(n) + a ribonucleoside 5'-diphosphate. In terms of biological role, involved in mRNA degradation. Catalyzes the phosphorolysis of single-stranded polyribonucleotides processively in the 3'- to 5'-direction. The protein is Polyribonucleotide nucleotidyltransferase of Polynucleobacter asymbioticus (strain DSM 18221 / CIP 109841 / QLW-P1DMWA-1) (Polynucleobacter necessarius subsp. asymbioticus).